The chain runs to 436 residues: Xylose isomerase (436 aa).

Residues His100 and Asp103 contribute to the active site. 7 residues coordinate Mg(2+): Glu231, Glu267, His270, Asp295, Asp306, Asp308, and Asp338.

The protein belongs to the xylose isomerase family. Homotetramer. It depends on Mg(2+) as a cofactor.

Its subcellular location is the cytoplasm. The enzyme catalyses alpha-D-xylose = alpha-D-xylulofuranose. The sequence is that of Xylose isomerase from Ruegeria sp. (strain TM1040) (Silicibacter sp.).